A 424-amino-acid chain; its full sequence is Serine--tRNA ligase (424 aa).

231-233 is a binding site for L-serine; it reads TAE. 262-264 serves as a coordination point for ATP; sequence RSE. Residue glutamate 285 participates in L-serine binding. An ATP-binding site is contributed by 349–352; that stretch reads EISS. L-serine is bound at residue serine 385.

It belongs to the class-II aminoacyl-tRNA synthetase family. Type-1 seryl-tRNA synthetase subfamily. In terms of assembly, homodimer. The tRNA molecule binds across the dimer.

It is found in the cytoplasm. It catalyses the reaction tRNA(Ser) + L-serine + ATP = L-seryl-tRNA(Ser) + AMP + diphosphate + H(+). It carries out the reaction tRNA(Sec) + L-serine + ATP = L-seryl-tRNA(Sec) + AMP + diphosphate + H(+). Its pathway is aminoacyl-tRNA biosynthesis; selenocysteinyl-tRNA(Sec) biosynthesis; L-seryl-tRNA(Sec) from L-serine and tRNA(Sec): step 1/1. Functionally, catalyzes the attachment of serine to tRNA(Ser). Is also able to aminoacylate tRNA(Sec) with serine, to form the misacylated tRNA L-seryl-tRNA(Sec), which will be further converted into selenocysteinyl-tRNA(Sec). This is Serine--tRNA ligase from Bacillus cytotoxicus (strain DSM 22905 / CIP 110041 / 391-98 / NVH 391-98).